Consider the following 631-residue polypeptide: MSATKLTRREQRARAQHFIDTLEGTAFPNSKRIYITGTHPGVRVPMREIQLSPTLIGGSKEQPQYEENEAIPVYDTSGPYGDPQIAINVQQGLAKLRQPWIDARADTEELTVRSSDYTRTRLADDGLDELRFSGLLTPKRAKTGRRVTQLHYARQGIITPEMEFIAIRENMGRERIRSEVLRHQHPGMSFGAHLPENITAEFVRDEVAAGRAIIPANINHPESEPMIIGRNFLVKVNANIGNSAVTSSIEEEVEKLVWSTRWGADTVMDLSTGRYIHETREWILRNSPVPIGTVPIYQALEKVNGIAEDLTWEAFRDTLLEQAEQGVDYFTIHAGVLLRYVPMTAKRLTGIVSRGGSIMAKWCLSHHQENFLYQHFREICEICAAYDVSLSLGDGLRPGSIQDANDEAQFAELHTLGELTKIAWEYDVQVMIEGPGHVPMQMIRRNMTEELEHCHEAPFYTLGPLTTDIAPGYDHFTSGIGAAMIGWFGCAMLCYVTPKEHLGLPNKEDVKQGLITYKIAAHAADLAKGHPGAQIRDNAMSKARFEFRWEDQFNLALDPFTARAYHDETLPQESGKVAHFCSMCGPKFCSMKISQEVRDYAAAQTIEVGMADMSENFRARGGEIYLHKEEA.

Substrate-binding positions include asparagine 239, methionine 268, tyrosine 297, histidine 333, 353–355 (SRG), 394–397 (DGLR), and glutamate 433. Histidine 437 provides a ligand contact to Zn(2+). Tyrosine 460 is a binding site for substrate. Histidine 501 is a binding site for Zn(2+). 3 residues coordinate [4Fe-4S] cluster: cysteine 581, cysteine 584, and cysteine 589.

Belongs to the ThiC family. In terms of assembly, homodimer. [4Fe-4S] cluster is required as a cofactor.

The enzyme catalyses 5-amino-1-(5-phospho-beta-D-ribosyl)imidazole + S-adenosyl-L-methionine = 4-amino-2-methyl-5-(phosphooxymethyl)pyrimidine + CO + 5'-deoxyadenosine + formate + L-methionine + 3 H(+). The protein operates within cofactor biosynthesis; thiamine diphosphate biosynthesis. Catalyzes the synthesis of the hydroxymethylpyrimidine phosphate (HMP-P) moiety of thiamine from aminoimidazole ribotide (AIR) in a radical S-adenosyl-L-methionine (SAM)-dependent reaction. The chain is Phosphomethylpyrimidine synthase from Shigella flexneri serotype 5b (strain 8401).